The primary structure comprises 393 residues: S-adenosylmethionine synthase (393 aa).

ATP is bound at residue histidine 16. Residue aspartate 18 coordinates Mg(2+). Glutamate 44 serves as a coordination point for K(+). L-methionine-binding residues include glutamate 57 and glutamine 100. The segment at 100–110 (QSPDIVMGVDG) is flexible loop. Residues 165–167 (DAK), 231–232 (RF), aspartate 240, 246–247 (RK), and lysine 267 contribute to the ATP site. Position 240 (aspartate 240) interacts with L-methionine. L-methionine is bound at residue lysine 271.

The protein belongs to the AdoMet synthase family. In terms of assembly, homotetramer; dimer of dimers. It depends on Mg(2+) as a cofactor. K(+) is required as a cofactor.

It localises to the cytoplasm. The catalysed reaction is L-methionine + ATP + H2O = S-adenosyl-L-methionine + phosphate + diphosphate. It participates in amino-acid biosynthesis; S-adenosyl-L-methionine biosynthesis; S-adenosyl-L-methionine from L-methionine: step 1/1. In terms of biological role, catalyzes the formation of S-adenosylmethionine (AdoMet) from methionine and ATP. The overall synthetic reaction is composed of two sequential steps, AdoMet formation and the subsequent tripolyphosphate hydrolysis which occurs prior to release of AdoMet from the enzyme. The polypeptide is S-adenosylmethionine synthase (Coxiella burnetii (strain CbuG_Q212) (Coxiella burnetii (strain Q212))).